A 217-amino-acid chain; its full sequence is Adapter protein MecA (217 aa).

This sequence belongs to the MecA family. In terms of assembly, homodimer.

Functionally, enables the recognition and targeting of unfolded and aggregated proteins to the ClpC protease or to other proteins involved in proteolysis. Acts negatively in the development of competence by binding ComK and recruiting it to the ClpCP protease. When overexpressed, inhibits sporulation. Also involved in Spx degradation by ClpC. This chain is Adapter protein MecA, found in Alkalihalophilus pseudofirmus (strain ATCC BAA-2126 / JCM 17055 / OF4) (Bacillus pseudofirmus).